The sequence spans 666 residues: tRNA 5-methylaminomethyl-2-thiouridine biosynthesis bifunctional protein MnmC (666 aa).

The tract at residues 1-253 (MSSPFVPIIT…KRHMICAHYE (253 aa)) is tRNA (mnm(5)s(2)U34)-methyltransferase. The segment at 283 to 666 (VGGGLAGCFI…FLRKKIIQGP (384 aa)) is FAD-dependent cmnm(5)s(2)U34 oxidoreductase.

In the N-terminal section; belongs to the methyltransferase superfamily. tRNA (mnm(5)s(2)U34)-methyltransferase family. The protein in the C-terminal section; belongs to the DAO family. The cofactor is FAD.

Its subcellular location is the cytoplasm. It carries out the reaction 5-aminomethyl-2-thiouridine(34) in tRNA + S-adenosyl-L-methionine = 5-methylaminomethyl-2-thiouridine(34) in tRNA + S-adenosyl-L-homocysteine + H(+). Functionally, catalyzes the last two steps in the biosynthesis of 5-methylaminomethyl-2-thiouridine (mnm(5)s(2)U) at the wobble position (U34) in tRNA. Catalyzes the FAD-dependent demodification of cmnm(5)s(2)U34 to nm(5)s(2)U34, followed by the transfer of a methyl group from S-adenosyl-L-methionine to nm(5)s(2)U34, to form mnm(5)s(2)U34. The polypeptide is tRNA 5-methylaminomethyl-2-thiouridine biosynthesis bifunctional protein MnmC (Legionella pneumophila (strain Lens)).